We begin with the raw amino-acid sequence, 133 residues long: Holo-[acyl-carrier-protein] synthase (133 aa).

D8 and E58 together coordinate Mg(2+).

This sequence belongs to the P-Pant transferase superfamily. AcpS family. The cofactor is Mg(2+).

Its subcellular location is the cytoplasm. The catalysed reaction is apo-[ACP] + CoA = holo-[ACP] + adenosine 3',5'-bisphosphate + H(+). In terms of biological role, transfers the 4'-phosphopantetheine moiety from coenzyme A to a Ser of acyl-carrier-protein. The sequence is that of Holo-[acyl-carrier-protein] synthase from Erythrobacter litoralis (strain HTCC2594).